The chain runs to 1857 residues: Fatty acid synthase subunit alpha (1857 aa).

Residues 96-132 form a disordered region; that stretch reads EEEPEATEPAPSATPAAPAAAPAAGAPPPPPSAGPAA. Positions 102-119 are enriched in low complexity; sequence TEPAPSATPAAPAAAPAA. One can recognise a Carrier domain in the interval 139–214; that stretch reads VTAVDILRTL…ASMQATFNGQ (76 aa). O-(pantetheine 4'-phosphoryl)serine is present on Ser-174. The disordered stretch occupies residues 577–604; it reads QIIPQENGHSKKGGRSAAKRNTPTRPGK. The interval 648–845 is beta-ketoacyl reductase; it reads KNVLMTGAGA…GAVIGWTRGT (198 aa). In terms of domain architecture, Ketosynthase family 3 (KS3) spans 1092-1633; that stretch reads LQEIVIQEDL…QKGAQVIGIH (542 aa). Active-site for beta-ketoacyl synthase activity residues include Cys-1275, His-1518, and His-1559. The Mg(2+) site is built by Asp-1743, Val-1744, and Glu-1745. Acetyl-CoA contacts are provided by residues 1743 to 1745, Tyr-1769, Ser-1779, 1788 to 1798, 1812 to 1815, and 1842 to 1844; these read DVE, EAVFKSLGVSS, VDAN, and ISH. Residues Ser-1843 and His-1844 each coordinate Mg(2+).

This sequence belongs to the thiolase-like superfamily. Fungal fatty acid synthetase subunit alpha family. As to quaternary structure, [Alpha(6)beta(6)] hexamers of two multifunctional subunits (alpha and beta).

The enzyme catalyses acetyl-CoA + n malonyl-CoA + 2n NADPH + 4n H(+) = a long-chain-acyl-CoA + n CoA + n CO2 + 2n NADP(+).. It catalyses the reaction a fatty acyl-[ACP] + malonyl-[ACP] + H(+) = a 3-oxoacyl-[ACP] + holo-[ACP] + CO2. The catalysed reaction is a (3R)-hydroxyacyl-[ACP] + NADP(+) = a 3-oxoacyl-[ACP] + NADPH + H(+). Fatty acid synthetase catalyzes the formation of long-chain fatty acids from acetyl-CoA, malonyl-CoA and NADPH. The alpha subunit contains domains for: acyl carrier protein, 3-oxoacyl-[acyl-carrier-protein] reductase, and 3-oxoacyl-[acyl-carrier-protein] synthase. The polypeptide is Fatty acid synthase subunit alpha (FAS2) (Penicillium patulum (Penicillium griseofulvum)).